Consider the following 446-residue polypeptide: Glutamate-1-semialdehyde 2,1-aminomutase (446 aa).

Lys264 carries the N6-(pyridoxal phosphate)lysine modification.

The protein belongs to the class-III pyridoxal-phosphate-dependent aminotransferase family. HemL subfamily. The cofactor is pyridoxal 5'-phosphate.

It is found in the cytoplasm. It catalyses the reaction (S)-4-amino-5-oxopentanoate = 5-aminolevulinate. Its pathway is porphyrin-containing compound metabolism; protoporphyrin-IX biosynthesis; 5-aminolevulinate from L-glutamyl-tRNA(Glu): step 2/2. This is Glutamate-1-semialdehyde 2,1-aminomutase from Natronomonas pharaonis (strain ATCC 35678 / DSM 2160 / CIP 103997 / JCM 8858 / NBRC 14720 / NCIMB 2260 / Gabara) (Halobacterium pharaonis).